Consider the following 147-residue polypeptide: Probable WRKY transcription factor 45 (147 aa).

The interval 21 to 52 (TEFHGVDNSAQPTTSSEEKPRSKKKKKEREAR) is disordered. Positions 59 to 124 (SQVDILDDGY…YQGVHTHAVD (66 aa)) form a DNA-binding region, WRKY. Cys-90, Cys-95, His-119, and His-121 together coordinate Zn(2+).

This sequence belongs to the WRKY group I family.

The protein resides in the nucleus. Transcription factor. Interacts specifically with the W box (5'-(T)TGAC[CT]-3'), a frequently occurring elicitor-responsive cis-acting element. In Arabidopsis thaliana (Mouse-ear cress), this protein is Probable WRKY transcription factor 45 (WRKY45).